Consider the following 485-residue polypeptide: Putative phosphoethanolamine transferase HI_1064 (485 aa).

Transmembrane regions (helical) follow at residues 33–53 (ILPA…ILIG), 55–75 (GMFT…ILLL), 81–101 (SFYF…PTGL), and 125–145 (FLLQ…ILIF).

Belongs to the phosphoethanolamine transferase family.

It localises to the cell membrane. In Haemophilus influenzae (strain ATCC 51907 / DSM 11121 / KW20 / Rd), this protein is Putative phosphoethanolamine transferase HI_1064.